A 286-amino-acid chain; its full sequence is Thymidylate synthase (286 aa).

Residue arginine 27 coordinates dUMP. A (6R)-5,10-methylene-5,6,7,8-tetrahydrofolate-binding site is contributed by histidine 57. 148–149 (RR) contributes to the dUMP binding site. Cysteine 168 serves as the catalytic Nucleophile. Residues 188–191 (RSAD), asparagine 199, and 229–231 (HLY) each bind dUMP. Residue aspartate 191 coordinates (6R)-5,10-methylene-5,6,7,8-tetrahydrofolate. Position 285 (alanine 285) interacts with (6R)-5,10-methylene-5,6,7,8-tetrahydrofolate.

The protein belongs to the thymidylate synthase family. Bacterial-type ThyA subfamily. In terms of assembly, homodimer.

It is found in the cytoplasm. It catalyses the reaction dUMP + (6R)-5,10-methylene-5,6,7,8-tetrahydrofolate = 7,8-dihydrofolate + dTMP. It functions in the pathway pyrimidine metabolism; dTTP biosynthesis. Functionally, catalyzes the reductive methylation of 2'-deoxyuridine-5'-monophosphate (dUMP) to 2'-deoxythymidine-5'-monophosphate (dTMP) while utilizing 5,10-methylenetetrahydrofolate (mTHF) as the methyl donor and reductant in the reaction, yielding dihydrofolate (DHF) as a by-product. This enzymatic reaction provides an intracellular de novo source of dTMP, an essential precursor for DNA biosynthesis. The chain is Thymidylate synthase from Psychrobacter sp. (strain PRwf-1).